We begin with the raw amino-acid sequence, 451 residues long: UPF0210 protein NMC1568 (451 aa).

Belongs to the UPF0210 family. As to quaternary structure, homodimer.

This chain is UPF0210 protein NMC1568, found in Neisseria meningitidis serogroup C / serotype 2a (strain ATCC 700532 / DSM 15464 / FAM18).